Consider the following 113-residue polypeptide: Large ribosomal subunit protein eL30 (113 aa).

Belongs to the eukaryotic ribosomal protein eL30 family.

The sequence is that of Large ribosomal subunit protein eL30 (RpL30) from Spodoptera frugiperda (Fall armyworm).